The primary structure comprises 200 residues: Large ribosomal subunit protein uL4 (200 aa).

Residues arginine 43–aspartate 71 form a disordered region.

The protein belongs to the universal ribosomal protein uL4 family. In terms of assembly, part of the 50S ribosomal subunit.

In terms of biological role, one of the primary rRNA binding proteins, this protein initially binds near the 5'-end of the 23S rRNA. It is important during the early stages of 50S assembly. It makes multiple contacts with different domains of the 23S rRNA in the assembled 50S subunit and ribosome. Forms part of the polypeptide exit tunnel. This Histophilus somni (strain 2336) (Haemophilus somnus) protein is Large ribosomal subunit protein uL4.